Consider the following 74-residue polypeptide: Translation initiation factor IF-1 2 (74 aa).

Positions 1-73 (MTKNKNVIEV…TRGRIVFRYR (73 aa)) constitute an S1-like domain.

It belongs to the IF-1 family. Component of the 30S ribosomal translation pre-initiation complex which assembles on the 30S ribosome in the order IF-2 and IF-3, IF-1 and N-formylmethionyl-tRNA(fMet); mRNA recruitment can occur at any time during PIC assembly.

It localises to the cytoplasm. In terms of biological role, one of the essential components for the initiation of protein synthesis. Stabilizes the binding of IF-2 and IF-3 on the 30S subunit to which N-formylmethionyl-tRNA(fMet) subsequently binds. Helps modulate mRNA selection, yielding the 30S pre-initiation complex (PIC). Upon addition of the 50S ribosomal subunit IF-1, IF-2 and IF-3 are released leaving the mature 70S translation initiation complex. This is Translation initiation factor IF-1 2 from Streptomyces avermitilis (strain ATCC 31267 / DSM 46492 / JCM 5070 / NBRC 14893 / NCIMB 12804 / NRRL 8165 / MA-4680).